Reading from the N-terminus, the 340-residue chain is Serine racemase (340 aa).

Residue E13 coordinates Mg(2+). Residues S31, S32, I33, K51, and T52 each contribute to the ATP site. Catalysis depends on K56, which acts as the Proton acceptor. Residue K56 is modified to N6-(pyridoxal phosphate)lysine. Positions 69 and 81 each coordinate Ca(2+). The Proton acceptor role is filled by S84. Position 86 (N86) interacts with pyridoxal 5'-phosphate. Q89 is a binding site for ATP. The residue at position 113 (C113) is an S-nitrosocysteine. Y121 contributes to the ATP binding site. N154 serves as a coordination point for pyridoxal 5'-phosphate. Residue D178 coordinates Mg(2+). Pyridoxal 5'-phosphate contacts are provided by G185, G186, G187, G188, and M189. Residues E210, A214, D216, and N247 each coordinate Mg(2+). Ca(2+)-binding residues include E210, A214, D216, and N247. 3 residues coordinate Mn(2+): E210, A214, and D216. Position 279 (K279) interacts with ATP. S313 is a binding site for pyridoxal 5'-phosphate. Residue N316 coordinates ATP.

This sequence belongs to the serine/threonine dehydratase family. As to quaternary structure, homodimer. Mg(2+) serves as cofactor. The cofactor is Mn(2+). It depends on Ca(2+) as a cofactor. Requires pyridoxal 5'-phosphate as cofactor. In terms of processing, S-nitrosylated, leading to decrease the enzyme activity. Expressed in the cerebellum, hippocampus, dorsolateral prefrontal cortex, and in motor neurons and glial cells of the lumbar spinal cord (at protein level). Increased in the dorsolateral prefrontal cortex of schizophrenic patients (at protein level). Brain: expressed at high levels in hippocampus and corpus callosum, intermediate levels in substantia nigra and caudate, and low levels in amygdala, thalamus, and subthalamic nuclei. Expressed in heart, skeletal muscle, kidney, and liver.

The enzyme catalyses L-serine = D-serine. It carries out the reaction D-serine = pyruvate + NH4(+). It catalyses the reaction L-serine = pyruvate + NH4(+). With respect to regulation, allosterically activated by magnesium, and possibly also other divalent metal cations. Allosterically activated by ATP, ADP or GTP. Competitively inhibited by malonate. Inhibited by meso-tartrate and malonate. Functionally, catalyzes the synthesis of D-serine from L-serine. D-serine is a key coagonist with glutamate at NMDA receptors. Has dehydratase activity towards both L-serine and D-serine. The protein is Serine racemase (SRR) of Homo sapiens (Human).